A 496-amino-acid chain; its full sequence is tRNA modification GTPase mss1, mitochondrial (496 aa).

A mitochondrion-targeting transit peptide spans Met-1–Phe-19. The 178-residue stretch at Gly-239–Glu-416 folds into the TrmE-type G domain. GTP is bound by residues Gly-246–Ser-253, Asp-293–Leu-297, and Asn-363–Asp-366.

Belongs to the TRAFAC class TrmE-Era-EngA-EngB-Septin-like GTPase superfamily. TrmE GTPase family.

It is found in the mitochondrion. GTPase involved in the 5-carboxymethylaminomethyl modification (mnm(5)s(2)U34) of the wobble uridine base in mitochondrial tRNAs. The chain is tRNA modification GTPase mss1, mitochondrial (mss1) from Schizosaccharomyces pombe (strain 972 / ATCC 24843) (Fission yeast).